The chain runs to 91 residues: Small ribosomal subunit protein uS15 (91 aa).

It belongs to the universal ribosomal protein uS15 family. Part of the 30S ribosomal subunit. Forms a bridge to the 50S subunit in the 70S ribosome, contacting the 23S rRNA.

Its function is as follows. One of the primary rRNA binding proteins, it binds directly to 16S rRNA where it helps nucleate assembly of the platform of the 30S subunit by binding and bridging several RNA helices of the 16S rRNA. In terms of biological role, forms an intersubunit bridge (bridge B4) with the 23S rRNA of the 50S subunit in the ribosome. The chain is Small ribosomal subunit protein uS15 from Rickettsia typhi (strain ATCC VR-144 / Wilmington).